A 155-amino-acid chain; its full sequence is Small ribosomal subunit protein bS6 (155 aa).

A disordered region spans residues 94-155; it reads VKQEGPLPTP…TPELEEQVKS (62 aa). Residues 103 to 112 show a composition bias toward polar residues; sequence PRSSNKSSNQ. Residues 113–141 are compositionally biased toward basic and acidic residues; it reads AEKKENENIDSANKSEPKADETDNKKKIT.

Belongs to the bacterial ribosomal protein bS6 family.

Its function is as follows. Binds together with bS18 to 16S ribosomal RNA. The protein is Small ribosomal subunit protein bS6 of Prochlorococcus marinus (strain MIT 9515).